Here is a 237-residue protein sequence, read N- to C-terminus: MSIHISAKPGEIADKILLPGDPLRAKFIAENFLEDAVCFNEVRNMFGYTGTYKGHRVSVMGTGMGIPSISIYAHELINEYGVKKLIRVGTAGSLNEDVHVRELVLAQAAATNSRMINIDWPEYDLPQIADFDLLDKAYHIAKELNMTTHVGNVLSSDSFYSPKLFSRNLELGQLGVKAVEMEAAALYYLGAKFGVQTLAIMTISDSLVNPEEDTTAEERQNTFTDMMKVGLETLIAE.

H4 is an a purine D-ribonucleoside binding site. Phosphate is bound by residues G20, R24, R43, and 87 to 90 (RVGT). Residues 180 to 182 (EME) and 204 to 205 (SD) contribute to the a purine D-ribonucleoside site. The active-site Proton donor is D205.

The protein belongs to the PNP/UDP phosphorylase family. In terms of assembly, homohexamer; trimer of homodimers.

The enzyme catalyses a purine D-ribonucleoside + phosphate = a purine nucleobase + alpha-D-ribose 1-phosphate. It carries out the reaction a purine 2'-deoxy-D-ribonucleoside + phosphate = a purine nucleobase + 2-deoxy-alpha-D-ribose 1-phosphate. Functionally, catalyzes the reversible phosphorolytic breakdown of the N-glycosidic bond in the beta-(deoxy)ribonucleoside molecules, with the formation of the corresponding free purine bases and pentose-1-phosphate. In Streptococcus suis (strain 98HAH33), this protein is Purine nucleoside phosphorylase DeoD-type.